A 281-amino-acid polypeptide reads, in one-letter code: Pantothenate synthetase (281 aa).

30–37 (MGYYHAGH) lines the ATP pocket. The active-site Proton donor is the His37. Gln61 contributes to the (R)-pantoate binding site. Position 61 (Gln61) interacts with beta-alanine. 147 to 150 (GEKD) is an ATP binding site. Gln153 contacts (R)-pantoate. Residues Val176 and 184-187 (MSSR) each bind ATP.

This sequence belongs to the pantothenate synthetase family. In terms of assembly, homodimer.

It is found in the cytoplasm. The catalysed reaction is (R)-pantoate + beta-alanine + ATP = (R)-pantothenate + AMP + diphosphate + H(+). It functions in the pathway cofactor biosynthesis; (R)-pantothenate biosynthesis; (R)-pantothenate from (R)-pantoate and beta-alanine: step 1/1. Functionally, catalyzes the condensation of pantoate with beta-alanine in an ATP-dependent reaction via a pantoyl-adenylate intermediate. This chain is Pantothenate synthetase, found in Oleidesulfovibrio alaskensis (strain ATCC BAA-1058 / DSM 17464 / G20) (Desulfovibrio alaskensis).